The following is a 203-amino-acid chain: uncharacterized protein (203 aa).

The protein belongs to the DadA oxidoreductase family.

Functionally, either a functional dehydrogenase or a non-functional fragment. This is an uncharacterized protein from Sinorhizobium fredii (strain NBRC 101917 / NGR234).